The chain runs to 423 residues: MLSFLGKSVALLAALQATLSSPKPGHRRASVEKRANGYANSVYFTNWGIYDRNFQPADLVASDVTHVIYSFMNLQADGTVISGDTYADYEKHYADDSWNDVGTNAYGCVKQLFKVKKANRGLKVLLSIGGWTWSTNFPSAASTDANRKNFAKTAITFMKDWGFDGIDIDWEYPADATQASNMILLLKEVRSQRDAYAAQYAPGYHFLLTIAAPAGKDNYSKLRLADLGQVLDYINLMAYDYAGSFSPLTGHDANLFNNPSNPNATPFNTDSAVKDYINGGVPANKIVLGMPIYGRSFQNTAGIGQTYNGVGSGSWEAGIWDYKALPKAGATVQYDSVAKGYYSYNSATKELISFDTPDMINTKVAYLKSLGLGGSMFWEASADKKGADSVIGTSHRALGGLDTTQNLLSYPNSKYDNIKNGLN.

An N-terminal signal peptide occupies residues 1-22 (MLSFLGKSVALLAALQATLSSP). Residues 23–34 (KPGHRRASVEKR) constitute a propeptide that is removed on maturation. The 364-residue stretch at 38 to 401 (YANSVYFTNW…GTSHRALGGL (364 aa)) folds into the GH18 domain. Residues 102-103 (GT) and 129-132 (GGWT) contribute to the chitin site. The Proton donor role is filled by Glu-171. Chitin is bound at residue Tyr-172. An N-linked (GlcNAc...) asparagine glycan is attached at Asn-218. Chitin is bound by residues 237–240 (MAYD) and Trp-378.

It belongs to the glycosyl hydrolase 18 family. Chitinase class V subfamily.

The protein resides in the secreted. The enzyme catalyses Random endo-hydrolysis of N-acetyl-beta-D-glucosaminide (1-&gt;4)-beta-linkages in chitin and chitodextrins.. Functionally, secreted chitinase involved in the degradation of chitin, a component of the cell walls of fungi and exoskeletal elements of some animals (including worms and arthropods). Plays a morphogenetic role during apical growth, cell division and differentiation (cell wall morphogenesis). Also acts as an antifungal agent. Involved in the degradation and further assimilation of phytopathogenic fungi, namely mycoparasitism, the major mechanism accounting for the antagonistic activity against phytopathogenic fungi displayed by Trichoderma. The polypeptide is Endochitinase 42 (chit42) (Trichoderma harzianum (Hypocrea lixii)).